The chain runs to 86 residues: Small ribosomal subunit protein uS17 (86 aa).

Belongs to the universal ribosomal protein uS17 family. As to quaternary structure, part of the 30S ribosomal subunit.

Its function is as follows. One of the primary rRNA binding proteins, it binds specifically to the 5'-end of 16S ribosomal RNA. The sequence is that of Small ribosomal subunit protein uS17 from Lactococcus lactis subsp. cremoris (strain SK11).